Reading from the N-terminus, the 126-residue chain is MSFTPRTARHTPFERRTTLMANTVIGSSIVIDGEISGDEDLVIQGTVKGKISLKESLYVEGSGVVEADIETQNVEIAGRVTGNIVASDKVELKTDCRVVGDIKAPRILIADGASFKGNVDMDMKER.

This sequence belongs to the bactofilin family. Interacts with BacN and probably also BacP, the 3 proteins colocalize as an extended structure. Interacts with PadC.

Its subcellular location is the cytoplasm. The protein resides in the cytoskeleton. Functionally, a non-essential component of the chromosome segregation machinery. Positions the ParA-ParB-parS chromosome segregation machinery within the cell; BacP seems to be the most important bactofilin in this process. Forms a heteropolymeric, subpolar scaffold in the cell; BacP probably forms the core, BacO contributes to position and integrity while BacN does not seem to contribute to assembly. This is Bactofilin BacO from Myxococcus xanthus (strain DK1622).